A 238-amino-acid chain; its full sequence is Accessory gene regulator A (238 aa).

A Response regulatory domain is found at 2-125 (KIFICEDDPK…LRTRIIDCLE (124 aa)). Residue Asp59 is modified to 4-aspartylphosphate. In terms of domain architecture, HTH LytTR-type spans 143 to 238 (IELKRGSNSV…YASVRNVKKI (96 aa)).

It localises to the cytoplasm. In terms of biological role, required for high-level post-exponential phase expression of a series of secreted proteins. The polypeptide is Accessory gene regulator A (agrA) (Staphylococcus aureus (strain COL)).